Reading from the N-terminus, the 312-residue chain is Plasma membrane-associated coenzyme Q6 reductase PGA3 (312 aa).

Residues 1–15 (MSKEDIEGTNILDEP) are Extracellular-facing. Residues 16 to 36 (VHGIYIPAALFVVGVAITTYM) form a helical membrane-spanning segment. At 37–39 (SGE) the chain is on the cytoplasmic side. A helical membrane pass occupies residues 40–60 (LKILWSLPILFMIIFVRAYSA). Topologically, residues 61 to 179 (YKRRRSLYPD…LNYEPNSSKH (119 aa)) are extracellular. An FAD-binding FR-type domain is found at 70–173 (DRWTSLELED…KGPIGTLNYE (104 aa)). Residues 153-168 (AGLNSGDTVDFKGPIG) and 179-211 (HLGIVAGGSGITPVLQILNEIITVPEDLTKVSL) contribute to the FAD site. Residues 180 to 200 (LGIVAGGSGITPVLQILNEII) traverse the membrane as a helical segment. The Cytoplasmic portion of the chain corresponds to 201-312 (TVPEDLTKVS…SSGDDQVFVF (112 aa)).

The protein belongs to the flavoprotein pyridine nucleotide cytochrome reductase family. FAD is required as a cofactor.

The protein resides in the cell membrane. It localises to the endoplasmic reticulum membrane. The enzyme catalyses 2 Fe(III)-[cytochrome b5] + NADH = 2 Fe(II)-[cytochrome b5] + NAD(+) + H(+). Inhibited by diphenylene iodonium (DPI). In terms of biological role, NADH-dependent cytochrome b5 reductase that reduces coenzyme Q6 at the plasma membrane and mediates lifespan extension by calorie restriction by shifting fermentative to respiratory metabolism, probably through modulating the NAD(+)/NADH ratio. The protein is Plasma membrane-associated coenzyme Q6 reductase PGA3 (PGA3) of Saccharomyces cerevisiae (strain ATCC 204508 / S288c) (Baker's yeast).